Here is a 318-residue protein sequence, read N- to C-terminus: Transaldolase (318 aa).

Lys132 functions as the Schiff-base intermediate with substrate in the catalytic mechanism.

This sequence belongs to the transaldolase family. Type 1 subfamily. As to quaternary structure, homodimer.

It is found in the cytoplasm. The enzyme catalyses D-sedoheptulose 7-phosphate + D-glyceraldehyde 3-phosphate = D-erythrose 4-phosphate + beta-D-fructose 6-phosphate. It participates in carbohydrate degradation; pentose phosphate pathway; D-glyceraldehyde 3-phosphate and beta-D-fructose 6-phosphate from D-ribose 5-phosphate and D-xylulose 5-phosphate (non-oxidative stage): step 2/3. Transaldolase is important for the balance of metabolites in the pentose-phosphate pathway. The protein is Transaldolase of Hamiltonella defensa subsp. Acyrthosiphon pisum (strain 5AT).